Consider the following 214-residue polypeptide: Methyltransferase HEMK2 (214 aa).

S-adenosyl-L-homocysteine contacts are provided by Thr-29, Glu-51, Gly-53, Asp-77, Asp-103, Leu-104, and Asn-122. Residues Thr-29, Glu-51, Gly-53, Asp-77, Asp-103, Leu-104, and Asn-122 each coordinate S-adenosyl-L-methionine. Asn-122 contributes to the a protein binding site.

This sequence belongs to the eukaryotic/archaeal PrmC-related family. Heterodimer; heterodimerization with TRMT112 is required for S-adenosyl-L-methionine-binding. As to quaternary structure, does not interact with TRMT112. Post-translationally, ubiquitinated, leading to its degradation by the proteasome. Widely expressed, with highest expression in parathyroid and pituitary glands, followed by adrenal gland and kidney, and lowest expression in leukocytes and mammary gland.

The protein resides in the nucleus. It catalyses the reaction L-lysyl-[histone] + S-adenosyl-L-methionine = N(6)-methyl-L-lysyl-[histone] + S-adenosyl-L-homocysteine + H(+). The enzyme catalyses L-glutaminyl-[protein] + S-adenosyl-L-methionine = N(5)-methyl-L-glutaminyl-[protein] + S-adenosyl-L-homocysteine + H(+). It carries out the reaction methylarsonous acid + S-adenosyl-L-methionine = dimethylarsinate + S-adenosyl-L-homocysteine + 2 H(+). Methyltransferase that can methylate proteins and, to a lower extent, arsenic. Catalytic subunit of a heterodimer with TRMT112, which monomethylates 'Lys-12' of histone H4 (H4K12me1), a modification present at the promoters of numerous genes encoding cell cycle regulators. Catalytic subunit of a heterodimer with TRMT112, which catalyzes N5-methylation of Glu residue of proteins with a Gly-Gln-Xaa-Xaa-Xaa-Arg motif. Methylates ETF1 on 'Gln-185'; ETF1 needs to be complexed to ERF3 in its GTP-bound form to be efficiently methylated. May also play a role in the modulation of arsenic-induced toxicity by mediating the conversion of monomethylarsonous acid (3+) into the less toxic dimethylarsonic acid. It however only plays a limited role in arsenic metabolism compared with AS3MT. This is Methyltransferase HEMK2 from Homo sapiens (Human).